The sequence spans 124 residues: MSAGQTYYEFYRGSSIGTALTDALDELITQGDIPPQLAMRVLQQFDKSLTECLQKGVKNKTTIKGHLSTYRLCDDVWTFVVKDPQFKMEGVGAGSEMVTGSKIKIVACKSGDAADGKKAGGARE.

It belongs to the TFIIA subunit 2 family. TFIIA is a heterodimer composed of the large TOA1 and the small TOA2 subunits.

Its subcellular location is the nucleus. TFIIA is a component of the transcription machinery of RNA polymerase II and plays an important role in transcriptional activation. TFIIA in a complex with tbp mediates transcriptional activity. This chain is Transcription initiation factor IIA subunit 2 (TOA2), found in Cryptococcus neoformans var. neoformans serotype D (strain JEC21 / ATCC MYA-565) (Filobasidiella neoformans).